The primary structure comprises 728 residues: Putative auxin response factor 20 (728 aa).

Positions 119-233 form a DNA-binding region, TF-B3 1; sequence FFEKQLSPAD…ELLVGVRRAP (115 aa). 2 stretches are compositionally biased toward low complexity: residues 665-689 and 700-712; these read PQGS…TTSA and ASSS…IIPS. The disordered stretch occupies residues 665 to 728; that stretch reads PQGSDEEAAA…IVNPRDGSQG (64 aa).

Belongs to the ARF family. As to quaternary structure, homo and heterodimers.

It localises to the nucleus. Its function is as follows. Auxin response factors (ARFs) are transcriptional factors that bind specifically to the DNA sequence 5'-TGTCTC-3' found in the auxin-responsive promoter elements (AuxREs). This is Putative auxin response factor 20 (ARF20) from Oryza sativa subsp. japonica (Rice).